The following is a 201-amino-acid chain: Superoxide dismutase [Mn] (201 aa).

Residues H27, H81, D163, and H167 each coordinate Mn(2+).

This sequence belongs to the iron/manganese superoxide dismutase family. In terms of assembly, homodimer. Requires Mn(2+) as cofactor.

The protein localises to the secreted. It catalyses the reaction 2 superoxide + 2 H(+) = H2O2 + O2. Functionally, destroys superoxide anion radicals which are normally produced within the cells and which are toxic to biological systems. The sequence is that of Superoxide dismutase [Mn] (sodA) from Streptococcus pyogenes serotype M3 (strain ATCC BAA-595 / MGAS315).